Consider the following 131-residue polypeptide: UPF0134 protein MPN_010 (131 aa).

Belongs to the UPF0134 family.

The protein is UPF0134 protein MPN_010 of Mycoplasma pneumoniae (strain ATCC 29342 / M129 / Subtype 1) (Mycoplasmoides pneumoniae).